The sequence spans 361 residues: Holliday junction branch migration complex subunit RuvB (361 aa).

Basic and acidic residues-rich tracts occupy residues 1 to 13 (MSDVERTEFKLPE) and 33 to 43 (QGEHDIERSLR). Positions 1–43 (MSDVERTEFKLPEGMDLSSPPQRNQDVDAAEQQGEHDIERSLR) are disordered. A large ATPase domain (RuvB-L) region spans residues 2-203 (SDVERTEFKL…FGFTAQMEYY (202 aa)). Residues Leu42, Arg43, Gly84, Lys87, Thr88, Thr89, 150–152 (EDF), Arg193, Tyr203, and Arg240 each bind ATP. Thr88 is a Mg(2+) binding site. A small ATPAse domain (RuvB-S) region spans residues 204-274 (DTEDLTRVIS…AAQAALRVFD (71 aa)). The tract at residues 277-361 (ERGLDRLDRA…PEGAIGGTLF (85 aa)) is head domain (RuvB-H). 2 residues coordinate DNA: Arg332 and Arg337.

It belongs to the RuvB family. Homohexamer. Forms an RuvA(8)-RuvB(12)-Holliday junction (HJ) complex. HJ DNA is sandwiched between 2 RuvA tetramers; dsDNA enters through RuvA and exits via RuvB. An RuvB hexamer assembles on each DNA strand where it exits the tetramer. Each RuvB hexamer is contacted by two RuvA subunits (via domain III) on 2 adjacent RuvB subunits; this complex drives branch migration. In the full resolvosome a probable DNA-RuvA(4)-RuvB(12)-RuvC(2) complex forms which resolves the HJ.

The protein localises to the cytoplasm. The catalysed reaction is ATP + H2O = ADP + phosphate + H(+). The RuvA-RuvB-RuvC complex processes Holliday junction (HJ) DNA during genetic recombination and DNA repair, while the RuvA-RuvB complex plays an important role in the rescue of blocked DNA replication forks via replication fork reversal (RFR). RuvA specifically binds to HJ cruciform DNA, conferring on it an open structure. The RuvB hexamer acts as an ATP-dependent pump, pulling dsDNA into and through the RuvAB complex. RuvB forms 2 homohexamers on either side of HJ DNA bound by 1 or 2 RuvA tetramers; 4 subunits per hexamer contact DNA at a time. Coordinated motions by a converter formed by DNA-disengaged RuvB subunits stimulates ATP hydrolysis and nucleotide exchange. Immobilization of the converter enables RuvB to convert the ATP-contained energy into a lever motion, pulling 2 nucleotides of DNA out of the RuvA tetramer per ATP hydrolyzed, thus driving DNA branch migration. The RuvB motors rotate together with the DNA substrate, which together with the progressing nucleotide cycle form the mechanistic basis for DNA recombination by continuous HJ branch migration. Branch migration allows RuvC to scan DNA until it finds its consensus sequence, where it cleaves and resolves cruciform DNA. The polypeptide is Holliday junction branch migration complex subunit RuvB (Corynebacterium aurimucosum (strain ATCC 700975 / DSM 44827 / CIP 107346 / CN-1) (Corynebacterium nigricans)).